The chain runs to 123 residues: UPF0382 membrane protein YwdK (123 aa).

The next 4 membrane-spanning stretches (helical) occupy residues 3–23, 49–69, 71–91, and 96–116; these read VFII…AFGA, ALGL…GSVT, AGWL…ILSV, and ILGA…IMIV.

The protein belongs to the UPF0382 family.

It is found in the cell membrane. This chain is UPF0382 membrane protein YwdK (ywdK), found in Bacillus subtilis (strain 168).